A 132-amino-acid polypeptide reads, in one-letter code: D-ribose pyranase (132 aa).

The Proton donor role is filled by H20. Residues D28, H98, and 120-122 each bind substrate; that span reads YAN.

The protein belongs to the RbsD / FucU family. RbsD subfamily. Homodecamer.

It is found in the cytoplasm. The enzyme catalyses beta-D-ribopyranose = beta-D-ribofuranose. The protein operates within carbohydrate metabolism; D-ribose degradation; D-ribose 5-phosphate from beta-D-ribopyranose: step 1/2. Catalyzes the interconversion of beta-pyran and beta-furan forms of D-ribose. This Geobacillus thermodenitrificans (strain NG80-2) protein is D-ribose pyranase.